Here is a 116-residue protein sequence, read N- to C-terminus: uncharacterized protein (116 aa).

A run of 2 helical transmembrane segments spans residues 24-44 (VPFA…VLTA) and 70-90 (VILT…IILS).

It localises to the membrane. This is an uncharacterized protein from Saccharomyces cerevisiae (strain ATCC 204508 / S288c) (Baker's yeast).